A 332-amino-acid polypeptide reads, in one-letter code: Anthranilate phosphoribosyltransferase (332 aa).

Residues Gly79, Gly82–Asp83, Ser87, Asn89–Thr92, Lys107–Ser115, and Ser119 each bind 5-phospho-alpha-D-ribose 1-diphosphate. Residue Gly79 coordinates anthranilate. Residue Ser91 coordinates Mg(2+). Asn110 contacts anthranilate. Arg165 is a binding site for anthranilate. 2 residues coordinate Mg(2+): Asp223 and Glu224.

This sequence belongs to the anthranilate phosphoribosyltransferase family. In terms of assembly, homodimer. Mg(2+) serves as cofactor.

The catalysed reaction is N-(5-phospho-beta-D-ribosyl)anthranilate + diphosphate = 5-phospho-alpha-D-ribose 1-diphosphate + anthranilate. The protein operates within amino-acid biosynthesis; L-tryptophan biosynthesis; L-tryptophan from chorismate: step 2/5. In terms of biological role, catalyzes the transfer of the phosphoribosyl group of 5-phosphorylribose-1-pyrophosphate (PRPP) to anthranilate to yield N-(5'-phosphoribosyl)-anthranilate (PRA). This is Anthranilate phosphoribosyltransferase from Sodalis glossinidius (strain morsitans).